Reading from the N-terminus, the 195-residue chain is UDP-N-acetylbacillosamine N-acetyltransferase (195 aa).

Residues 13 to 15, 35 to 36, and glycine 56 contribute to the substrate site; these read SGH and DD. Histidine 125 acts as the Proton acceptor in catalysis. The acetyl-CoA site is built by histidine 134, isoleucine 155, and glycine 173.

Belongs to the transferase hexapeptide repeat family. As to quaternary structure, homotrimer.

The catalysed reaction is UDP-N-acetylbacillosamine + acetyl-CoA = UDP-N,N'-diacetylbacillosamine + CoA + H(+). It participates in protein modification; protein glycosylation. Its function is as follows. Acetyltransferase that modifies the UDP-4-amino-sugar to form UDP-N,N'-diacetylbacillosamine in the N-linked protein glycosylation pathway. This is UDP-N-acetylbacillosamine N-acetyltransferase (pglD) from Campylobacter jejuni subsp. jejuni serotype O:2 (strain ATCC 700819 / NCTC 11168).